The chain runs to 143 residues: Large ribosomal subunit protein uL13c (143 aa).

It belongs to the universal ribosomal protein uL13 family. Part of the 50S ribosomal subunit.

It localises to the plastid. The protein localises to the chloroplast. This is Large ribosomal subunit protein uL13c from Guillardia theta (Cryptophyte).